A 573-amino-acid chain; its full sequence is MTPESRDTTDLSPGGTQEMEGIVIVKVEEEDEEDHFQKERNKVESSPQVLSRSTTMNERALLSSYLVAYRVAKEKMAHTAAEKIILPACMDMVRTIFDDKSADKLRTIPLSDNTISRRICTIAKHLEAMLITRLQSGIDFAIQLDESTDIASCPTLLVYVRYVWQDDFVEDLLCCLNLNSHITGLDLFTELENCLLGQYKLNWKHCKGISSDGTANMTGKHSRLTEKLLEATHNNAVWNHCFIHREALVSKEISPSLMDVLKNAVKTVNFIKGSSLNSRLLEIFCSEIGVNHTHLLFHTEVRWLSQGKVLSRVYELRNEIYIFLVEKQSHLANIFEDDIWVTKLAYLSDIFGILNELSLKMQGKNNDIFQYLEHILGFQKTLLLWQARLKSNRPSYYMFPTLLQHIEENIINEDCLKEIKLEILLHLTSLSQTFNYYFPEEKFESLKENIWMKDPFAFQNPESIIELNLEPEEENELLQLSSSFTLKNYYKILSLSAFWIKIKDDFPLLSRKSILLLLPFTTTYLCELGFSILTRLKTKKRNRLNSAPDMRVALSSCVPDWKELMNRQAHPSH.

The segment at 1–51 (MTPESRDTTDLSPGGTQEMEGIVIVKVEEEDEEDHFQKERNKVESSPQVLS) is disordered. Topologically, residues 1-513 (MTPESRDTTD…DDFPLLSRKS (513 aa)) are extracellular. A helical transmembrane segment spans residues 514-533 (ILLLLPFTTTYLCELGFSIL). Residues 534–573 (TRLKTKKRNRLNSAPDMRVALSSCVPDWKELMNRQAHPSH) lie on the Cytoplasmic side of the membrane.

Belongs to the FAM200 family.

It localises to the membrane. This chain is Protein FAM200A (FAM200A), found in Homo sapiens (Human).